The chain runs to 65 residues: UPF0434 protein IL1511 (65 aa).

Belongs to the UPF0434 family.

This chain is UPF0434 protein IL1511, found in Idiomarina loihiensis (strain ATCC BAA-735 / DSM 15497 / L2-TR).